A 242-amino-acid polypeptide reads, in one-letter code: Probable L-ribulose-5-phosphate 4-epimerase UlaF (242 aa).

Residues 31–32 (GN), 48–49 (SG), and 78–79 (SS) each bind substrate. Zn(2+) contacts are provided by aspartate 80, histidine 99, and histidine 101. Aspartate 124 serves as the catalytic Proton donor/acceptor. Histidine 175 provides a ligand contact to Zn(2+). Tyrosine 234 (proton donor/acceptor) is an active-site residue.

The protein belongs to the aldolase class II family. AraD/FucA subfamily. The cofactor is Zn(2+).

It carries out the reaction L-ribulose 5-phosphate = D-xylulose 5-phosphate. It functions in the pathway cofactor degradation; L-ascorbate degradation; D-xylulose 5-phosphate from L-ascorbate: step 4/4. Its function is as follows. Catalyzes the isomerization of L-ribulose 5-phosphate to D-xylulose 5-phosphate. Is involved in the anaerobic L-ascorbate utilization. This chain is Probable L-ribulose-5-phosphate 4-epimerase UlaF, found in Mycoplasma pneumoniae (strain ATCC 29342 / M129 / Subtype 1) (Mycoplasmoides pneumoniae).